The sequence spans 1062 residues: NACHT, LRR and PYD domains-containing protein 2 (1062 aa).

The Pyrin domain maps to 1-94 (MVSSAQMGFN…SERAKDEVRE (94 aa)). Residues 207–526 (YTVVLYGPAG…LEKEEEEDRD (320 aa)) enclose the NACHT domain. ATP is bound at residue 213–220 (GPAGLGKT). Ser671 is modified (phosphoserine). LRR repeat units lie at residues 812–832 (SLTCVNLSDNELLDEGAKLLY), 841–861 (FLQRLSLENCHLTEANCKDLA), 869–889 (ELTHLCLAKNPIGNTGVKFLC), 898–918 (KLQTLVLWNCDITSDGCCDLT), 926–946 (SLLCLDLGLNHIGVKGMKFLC), 955–976 (NLRCLWLWGCSIPPFSCEDLCS), 983–1003 (SLVTLDLGQNPLGSSGVKMLF), and 1010–1033 (SGTLRTLRLKIDDFNDELNKLLEE).

It belongs to the NLRP family. Interacts with CHUK. Interacts with IKBKB. Interacts with IKBKG. Interacts with MEFV. Interacts with PYCARD. Interacts (via pyrin domain) with PYDC2. Interacts with CARD8. As to expression, expressed at high levels in lung, placenta and thymus and at lower levels in ovary, intestine and brain. Highly abundant in oocytes and early embryos, however poorly expressed in somatic tissues such as brain, kidney, liver and spinal cord.

The protein resides in the cytoplasm. Its function is as follows. Suppresses TNF- and CD40-induced NFKB1 activity at the level of the IKK complex, by inhibiting NFKBIA degradation induced by TNF. When associated with PYCARD, activates CASP1, leading to the secretion of mature pro-inflammatory cytokine IL1B. May be a component of the inflammasome, a protein complex which also includes PYCARD, CARD8 and CASP1 and whose function would be the activation of pro-inflammatory caspases. In Homo sapiens (Human), this protein is NACHT, LRR and PYD domains-containing protein 2 (NLRP2).